The primary structure comprises 209 residues: Ribosomal RNA large subunit methyltransferase E (209 aa).

5 residues coordinate S-adenosyl-L-methionine: G63, W65, D83, D99, and D124. K164 functions as the Proton acceptor in the catalytic mechanism.

This sequence belongs to the class I-like SAM-binding methyltransferase superfamily. RNA methyltransferase RlmE family.

It localises to the cytoplasm. It carries out the reaction uridine(2552) in 23S rRNA + S-adenosyl-L-methionine = 2'-O-methyluridine(2552) in 23S rRNA + S-adenosyl-L-homocysteine + H(+). Functionally, specifically methylates the uridine in position 2552 of 23S rRNA at the 2'-O position of the ribose in the fully assembled 50S ribosomal subunit. The polypeptide is Ribosomal RNA large subunit methyltransferase E (Photorhabdus laumondii subsp. laumondii (strain DSM 15139 / CIP 105565 / TT01) (Photorhabdus luminescens subsp. laumondii)).